Here is a 1762-residue protein sequence, read N- to C-terminus: Lysine-specific demethylase 3B (1762 aa).

Ala-2 carries the N-acetylalanine modification. Disordered stretches follow at residues 253-350 (MDSS…FVPQ) and 426-468 (TTAS…NSSL). Basic and acidic residues predominate over residues 299-310 (ATKKLKGDRGEV). Over residues 426–435 (TTASSTPTTV) the composition is skewed to low complexity. Positions 453–465 (GSWSQASGENSRN) are enriched in polar residues. Phosphoserine occurs at positions 493, 547, 557, and 561. The interval 574–613 (SVLGADTQPGPKAGSSVDRKVPAESMPTLTPAFPRSLLNT) is disordered. Position 615 is a phosphothreonine (Thr-615). Positions 713–746 (TGSPSLSAVGNGRSSSPTNSLTQPIEMPTLSSSP) are enriched in polar residues. A disordered region spans residues 713–763 (TGSPSLSAVGNGRSSSPTNSLTQPIEMPTLSSSPTEERPTVGPGQQDNPLL). A phosphoserine mark is found at Ser-767, Ser-774, and Ser-779. A Glycyl lysine isopeptide (Lys-Gly) (interchain with G-Cter in SUMO2) cross-link involves residue Lys-789. Residue Ser-799 is modified to Phosphoserine. The interval 806–853 (ACRQDSDSSTNSDLSDLSDSEEQLQAKSGLKGIPEHLMGKLGPNGERS) is disordered. A C6-type zinc finger spans residues 1032–1057 (CDVCETTLFNIHWVCRKCGFGVCLDC). Positions 1146–1163 (QLPSVTPSASSGNETTFS) are enriched in polar residues. The interval 1146-1217 (QLPSVTPSAS…AIRPPCPDTA (72 aa)) is disordered. Phosphoserine is present on residues Ser-1254 and Ser-1260. The interval 1285 to 1306 (SNSKTEGSSLRDLLHSGPGKLP) is disordered. Residues 1294–1298 (LRDLL) carry the LXXLL motif motif. A JmjC domain is found at 1499-1722 (MPTRFEDLME…HCFRLTQEFR (224 aa)). Fe cation contacts are provided by His-1561, Asp-1563, and His-1690.

The protein belongs to the JHDM2 histone demethylase family. It depends on Fe(2+) as a cofactor.

The protein localises to the nucleus. The enzyme catalyses N(6),N(6)-dimethyl-L-lysyl(9)-[histone H3] + 2 2-oxoglutarate + 2 O2 = L-lysyl(9)-[histone H3] + 2 formaldehyde + 2 succinate + 2 CO2. In terms of biological role, histone demethylase that specifically demethylates 'Lys-9' of histone H3, thereby playing a central role in histone code. Demethylation of Lys residue generates formaldehyde and succinate May have tumor suppressor activity. The chain is Lysine-specific demethylase 3B (Kdm3b) from Mus musculus (Mouse).